The chain runs to 110 residues: uncharacterized protein (110 aa).

The protein belongs to the HesB/IscA family.

This is an uncharacterized protein from Rickettsia prowazekii (strain Madrid E).